Reading from the N-terminus, the 1343-residue chain is Vascular endothelial growth factor receptor 2 (1343 aa).

The N-terminal stretch at 1–19 (MESRALLAVALWFCVETRA) is a signal peptide. Over 20-760 (ASVGLPGDSL…EGVQEKTNLE (741 aa)) the chain is Extracellular. N-linked (GlcNAc...) asparagine glycosylation is found at Asn46, Asn96, Asn143, Asn158, and Asn245. Ig-like C2-type domains lie at 46–109 (NTTL…RDTD), 141–207 (NKNK…INDE), 224–320 (YDVV…KNKT), 328–414 (PFIA…HMVS), 421–540 (PQIG…RVIS), 547–654 (PEIT…LVKQ), and 663–749 (PMIT…TLFI). The cysteines at positions 53 and 103 are disulfide-linked. A disulfide bond links Cys150 and Cys200. The cysteines at positions 246 and 307 are disulfide-linked. N-linked (GlcNAc...) asparagine glycosylation is found at Asn318, Asn374, Asn395, Asn507, Asn576, Asn609, Asn615, Asn627, Asn671, Asn700, and Asn717. 2 cysteine pairs are disulfide-bonded: Cys445-Cys526 and Cys567-Cys638. Residues Cys684 and Cys733 are joined by a disulfide bond. A helical membrane pass occupies residues 761–781 (VIILVGTAVIAMFFWLLLVIL). Over 782–1343 (VRTVKRANEG…SGTTLRSSPV (562 aa)) the chain is Cytoplasmic. At Tyr797 the chain carries Phosphotyrosine. Residues 830-1158 (LKLGKPLGRG…FSELVEHLGN (329 aa)) form the Protein kinase domain. ATP is bound by residues 836-844 (LGRGAFGQV) and Lys864. Tyr947 is subject to Phosphotyrosine; by autocatalysis. Phosphoserine occurs at positions 978 and 980. A Phosphotyrosine; by autocatalysis modification is found at Tyr992. A disulfide bridge connects residues Cys1020 and Cys1041. Asp1024 functions as the Proton acceptor in the catalytic mechanism. Tyr1050, Tyr1055, Tyr1171, and Tyr1210 each carry phosphotyrosine; by autocatalysis. Residues Ser1227 and Ser1231 each carry the phosphoserine modification. At Thr1234 the chain carries Phosphothreonine. The disordered stretch occupies residues 1267–1314 (TLEDRNKLSPSFGGMMPSKSRESVASEGSNQTSGYQSGYHSDDTDTTV). The segment covering 1292–1305 (SEGSNQTSGYQSGY) has biased composition (polar residues). Phosphotyrosine; by autocatalysis occurs at positions 1301, 1305, and 1315.

The protein belongs to the protein kinase superfamily. Tyr protein kinase family. CSF-1/PDGF receptor subfamily. As to quaternary structure, homodimer in the presence of bound dimeric VEGFA, VEGFC or VEGFD ligands; monomeric in the absence of bound ligands. Can also form heterodimers with FLT1/VEGFR1 and KDR/VEGFR2. Interacts (tyrosine phosphorylated) with LFYN, NCK1, PLCG1. Interacts (tyrosine-phosphorylated active form preferentially) with DAB2IP (via C2 domain and active form preferentially); the interaction occurs at the late phase of VEGFA response and inhibits KDR/VEGFR2 activity. Interacts with SHBSH2D2A/TSAD, GRB2, MYOF, CBL and PDCD6. Interacts (via C-terminus domain) with ERN1 (via kinase domain); the interaction is facilitated in a XBP1- and vascular endothelial growth factor (VEGF)-dependent manner in endothelial cells. Interacts (via juxtamembrane region) with chaperone PDCL3 (via thioredoxin fold region); the interaction leads to increased KDR/VEGFR2 abundance through inhibition of its ubiquitination and degradation. Interacts (tyrosine phosphorylated) with CCDC88A/GIV (via SH2-like region); binding requires autophosphorylation of the KDR/VEGFR2 C-terminal region. Interacts with isoform 2 of BSG. Interacts with SLC31A1; this interaction is induced upon VEGFA stimulation leading to SLC31A1 and KDR subsequent co-internalization to early endosomes, thereby activating KDR downstream signaling in endothelial cells. In terms of processing, N-glycosylated. Post-translationally, ubiquitinated. Tyrosine phosphorylation of the receptor promotes its poly-ubiquitination, leading to its degradation via the proteasome or lysosomal proteases. Autophosphorylated on tyrosine residues upon ligand binding. Autophosphorylation occurs in trans, i.e. one subunit of the dimeric receptor phosphorylates tyrosine residues on the other subunit. Phosphorylation at Tyr-947 is important for interaction with SH2D2A/TSAD and VEGFA-mediated reorganization of the actin cytoskeleton. Phosphorylation at Tyr-1171 is important for interaction with PLCG1 and SHB. Phosphorylation at Tyr-1210 is important for interaction with NCK1 and FYN. Dephosphorylated by PTPRB. Dephosphorylated by PTPRJ at Tyr-797, Tyr-947, Tyr-992, Tyr-1050, Tyr-1055, Tyr-1171 and Tyr-1210. In terms of processing, the inhibitory disulfide bond between Cys-1020 and Cys-1041 may serve as a specific molecular switch for H(2)S-induced modification that regulates KDR/VEGFR2 function. In terms of tissue distribution, expressed in the post-pubertal mammary glands.

The protein resides in the cell membrane. It is found in the cytoplasm. Its subcellular location is the nucleus. It localises to the cytoplasmic vesicle. The protein localises to the early endosome. The protein resides in the cell junction. It is found in the endoplasmic reticulum. It carries out the reaction L-tyrosyl-[protein] + ATP = O-phospho-L-tyrosyl-[protein] + ADP + H(+). Its activity is regulated as follows. Present in an inactive conformation in the absence of bound ligand. Binding of VEGFA, VEGFC or VEGFD leads to dimerization and activation by autophosphorylation on tyrosine residues. May be regulated by hydrogen sulfide (H(2)S) levels via a sensitive intracellular disulfide bond. Its function is as follows. Tyrosine-protein kinase that acts as a cell-surface receptor for VEGFA, VEGFC and VEGFD. Plays an essential role in the regulation of angiogenesis, vascular development, vascular permeability, and embryonic hematopoiesis. Promotes proliferation, survival, migration and differentiation of endothelial cells. Promotes reorganization of the actin cytoskeleton. Isoforms lacking a transmembrane domain may function as decoy receptors for VEGFA, VEGFC and/or VEGFD. Modulates FLT1 and FLT4 signaling by forming heterodimers. Binding of vascular growth factors to isoform 1 leads to the activation of several signaling cascades. Activation of PLCG1 leads to the production of the cellular signaling molecules diacylglycerol and inositol-1,4,5-trisphosphate and the activation of protein kinase C. Mediates activation of MAPK1/ERK2, MAPK3/ERK1 and the MAP kinase signaling pathway, as well as of the AKT1 signaling pathway. Mediates phosphorylation of PIK3R1, the regulatory subunit of phosphatidylinositol 3-kinase, reorganization of the actin cytoskeleton and activation of PTK2/FAK1. Required for VEGFA-mediated induction of NOS2 and NOS3, leading to the production of the signaling molecule nitric oxide (NO) by endothelial cells. Phosphorylates PLCG1. Promotes phosphorylation of FYN, NCK1, NOS3, PIK3R1, PTK2/FAK1 and SRC. The polypeptide is Vascular endothelial growth factor receptor 2 (Rattus norvegicus (Rat)).